The primary structure comprises 315 residues: WD repeat domain-containing protein 83 (315 aa).

WD repeat units lie at residues C23–T62, G65–K104, G107–V146, E151–D188, V190–E228, G231–A272, and V275–G313.

Belongs to the WD repeat MORG1 family. Interacts with EGLN3/PHD3. Interacts with ERK signaling proteins MAP2K1/MEK1, MAP2K2/MEK2, LAMTOR3, ARAF/Raf-1, MAPK1/ERK2 and MAPK3/ERK1. Identified in the spliceosome C complex. Interacts with PARD6B and CRB3. Interacts strongly with GTP-bound RRAGA but not with inactive GDP-bound. Interacts with p62/SQSTM1. In terms of tissue distribution, highly expressed in testis and brain. Expressed at intermediate level in heart, liver and kidney. Weakly expressed in spleen and lung and absent in muscle.

It is found in the cytoplasm. The protein localises to the lysosome. Its subcellular location is the nucleus. In terms of biological role, molecular scaffold protein for various multimeric protein complexes. Acts as a module in the assembly of a multicomponent scaffold for the ERK pathway, linking ERK responses to specific agonists. At low concentrations it enhances ERK activation, whereas high concentrations lead to the inhibition of ERK activation. Also involved in response to hypoxia by acting as a negative regulator of HIF1A/HIF-1-alpha via its interaction with EGLN3/PHD3. May promote degradation of HIF1A. May act by recruiting signaling complexes to a specific upstream activator. May also be involved in pre-mRNA splicing. Participates in tight junction development by regulating apico-basal polarity, a key step in tissue development and organization. Mechanistically, regulates the translocation of PAR6-aPKC from the cytoplasm to the apical surface by acting as an adapter between PARD6B AND CRB3. Also acts as a negative regulator of mTORC1 under nutrient-rich conditions by binding to the active Rag GTPases to inhibit mTORC1 localization to the lysosome and phosphorylation of downstream targets. This facilitates constitutive basal autophagy during nutrient availability. The sequence is that of WD repeat domain-containing protein 83 (Wdr83) from Rattus norvegicus (Rat).